Reading from the N-terminus, the 229-residue chain is Clathrin light chain (229 aa).

Disordered regions lie at residues 1-24 (MSQFPALEDFDDGLVTAPVDDSKN) and 76-132 (EMQA…KLRE). Over residues 107 to 132 (EPVRKWKEDQMKRIQERDESSKKLRE) the composition is skewed to basic and acidic residues. Phosphoserine is present on Ser229.

This sequence belongs to the clathrin light chain family. Clathrin coats are formed from molecules containing 3 heavy chains and 3 light chains.

The protein localises to the cytoplasmic vesicle membrane. The protein resides in the membrane. It is found in the coated pit. Its function is as follows. Clathrin is the major protein of the polyhedral coat of coated pits and vesicles. The chain is Clathrin light chain (clc1) from Schizosaccharomyces pombe (strain 972 / ATCC 24843) (Fission yeast).